The primary structure comprises 906 residues: MCRIAGALRTLLPLLAALLQASVEASGEIALCKTGFPEDVYSAVLSKDVHEGQPLLNVKFSNCNGKRKVQYESSEPADFKVDEDGMVYAVRSFPLSSEHAKFLIYAQDKETQEKWQVAVKLSLKPTLTEESVKESAEVEEIVFPRQFSKHSGHLQRQKRDWVIPPINLPENSRGPFPQELVRIRSDRDKNLSLRYSVTGPGADQPPTGIFIINPISGQLSVTKPLDREQIARFHLRAHAVDINGNQVENPIDIVINVIDMNDNRPEFLHQVWNGTVPEGSKPGTYVMTVTAIDADDPNALNGMLRYRIVSQAPSTPSPNMFTINNETGDIITVAAGLDREKVQQYTLIIQATDMEGNPTYGLSNTATAVITVTDVNDNPPEFTAMTFYGEVPENRVDIIVANLTVTDKDQPHTPAWNAVYRISGGDPTGRFAIQTDPNSNDGLVTVVKPIDFETNRMFVLTVAAENQVPLAKGIQHPPQSTATVSVTVIDVNENPYFAPNPKIIRQEEGLHAGTMLTTFTAQDPDRYMQQNIRYTKLSDPANWLKIDPVNGQITTIAVLDRESPNVKNNIYNATFLASDNGIPPMSGTGTLQIYLLDINDNAPQVLPQEAETCETPDPNSINITALDYDIDPNAGPFAFDLPLSPVTIKRNWTITRLNGDFAQLNLKIKFLEAGIYEVPIIITDSGNPPKSNISILRVKVCQCDSNGDCTDVDRIVGAGLGTGAIIAILLCIIILLILVLMFVVWMKRRDKERQAKQLLIDPEDDVRDNILKYDEEGGGEEDQDYDLSQLQQPDTVEPDAIKPVGIRRMDERPIHAEPQYPVRSAAPHPGDIGDFINEGLKAADNDPTAPPYDSLLVFDYEGSGSTAGSLSSLNSSSSGGEQDYDYLNDWGPRFKKLADMYGGGDD.

Residues 1 to 25 form the signal peptide; that stretch reads MCRIAGALRTLLPLLAALLQASVEA. The propeptide occupies 26-159; the sequence is SGEIALCKTG…HSGHLQRQKR (134 aa). Phosphoserine; by FAM20C is present on residues Ser96 and Ser135. Cadherin domains are found at residues 160-267, 268-382, 383-497, 498-603, and 604-714; these read DWVI…RPEF, LHQV…PPEF, TAMT…NPYF, APNP…DNAP, and QVLP…DVDR. Over 160 to 724 the chain is Extracellular; it reads DWVIPPINLP…IVGAGLGTGA (565 aa). Glu170 provides a ligand contact to Ca(2+). The N-linked (GlcNAc...) asparagine glycan is linked to Asn190. Positions 226, 228, 259, 260, 261, 262, and 263 each coordinate Ca(2+). A glycan (N-linked (GlcNAc...) asparagine) is linked at Asn273. Ca(2+) contacts are provided by Asp293, Asp295, and Asn301. Asn325 carries N-linked (GlcNAc...) asparagine glycosylation. A Ca(2+)-binding site is contributed by Asp353. N-linked (GlcNAc...) asparagine glycosylation is found at Asn402, Asn572, Asn651, and Asn692. Residues 725–745 form a helical membrane-spanning segment; it reads IIAILLCIIILLILVLMFVVW. At 746 to 906 the chain is on the cytoplasmic side; sequence MKRRDKERQA…LADMYGGGDD (161 aa). The segment covering 863–880 has biased composition (low complexity); it reads SGSTAGSLSSLNSSSSGG. The segment at 863 to 884 is disordered; the sequence is SGSTAGSLSSLNSSSSGGEQDY.

As to quaternary structure, homodimer (via extracellular region). Can also form heterodimers with other cadherins (via extracellular region). Dimerization occurs in trans, i.e. with a cadherin chain from another cell. Interacts with CDCP1. Interacts with PCDH8; this complex may also include TAOK2. The interaction with PCDH8 may lead to internalization through TAOK2/p38 MAPK pathway. Identified in a complex containing FGFR4, NCAM1, CDH2, PLCG1, FRS2, SRC, SHC1, GAP43 and CTTN. May interact with OBSCN (via protein kinase domain 2). Interacts with FBXO45. In terms of processing, cleaved by MMP24. Ectodomain cleavage leads to the generation of a soluble 90 kDa N-terminal soluble fragment and a 45 kDa membrane-bound C-terminal fragment 1 (CTF1), which is further cleaved by gamma-secretase into a 35 kDa. Cleavage in neural stem cells by MMP24 affects CDH2-mediated anchorage of neural stem cells to ependymocytes in the adult subependymal zone, leading to modulate neural stem cell quiescence. Post-translationally, may be phosphorylated by OBSCN.

Its subcellular location is the cell membrane. It localises to the sarcolemma. The protein resides in the cell junction. The protein localises to the cell surface. It is found in the desmosome. Its subcellular location is the adherens junction. In terms of biological role, calcium-dependent cell adhesion protein; preferentially mediates homotypic cell-cell adhesion by dimerization with a CDH2 chain from another cell. Cadherins may thus contribute to the sorting of heterogeneous cell types. Acts as a regulator of neural stem cells quiescence by mediating anchorage of neural stem cells to ependymocytes in the adult subependymal zone: upon cleavage by MMP24, CDH2-mediated anchorage is affected, leading to modulate neural stem cell quiescence. Plays a role in cell-to-cell junction formation between pancreatic beta cells and neural crest stem (NCS) cells, promoting the formation of processes by NCS cells. Required for proper neurite branching. Required for pre- and postsynaptic organization. CDH2 may be involved in neuronal recognition mechanism. In hippocampal neurons, may regulate dendritic spine density. The sequence is that of Cadherin-2 (CDH2) from Homo sapiens (Human).